A 228-amino-acid polypeptide reads, in one-letter code: Thermonuclease (228 aa).

The first 23 residues, 1 to 23, serve as a signal peptide directing secretion; it reads MTEYLLSAGICMAIVSILLIGMA. Positions 24 to 60 are excised as a propeptide; sequence ISNVSKGQYAKRFFFFATSCLVLTLVVVSSLSSSANA. A Ca(2+)-binding site is contributed by aspartate 100. Arginine 114 is an active-site residue. Residues aspartate 119 and threonine 120 each contribute to the Ca(2+) site. Catalysis depends on residues glutamate 122 and arginine 166.

It belongs to the thermonuclease family. Requires Ca(2+) as cofactor.

It localises to the secreted. The enzyme catalyses Endonucleolytic cleavage to nucleoside 3'-phosphates and 3'-phosphooligonucleotide end-products.. Its function is as follows. Enzyme that catalyzes the hydrolysis of both DNA and RNA at the 5' position of the phosphodiester bond. This Staphylococcus aureus (strain MSSA476) protein is Thermonuclease (nuc).